A 562-amino-acid chain; its full sequence is MDAVSCAINALSAQAPPKHLGGNNVGRKSVTFPKDIWGDYFLKISPNEEKLDSWRVRAKELKEKVFDILSCAKGAEQVHIIDALYHLGVSYQFEKEIEEALKNMLTTYNDDTSTEDDLYTLALRFRLLRQNGFHASTKALNKFKDAHGSFREDLASDVMGLLSLYEASYAGTVDDLILDEALAFTKIHLKAALPHLDSHLAQRVSHSLELPLHKRIQRLEAREFISLCEKDDSIVIKELLEFAKLDYNILQALHQWELKELTKWWKKLNLVGKMTFARDRMTEIYFYVSGFFFEPQYSRGRIISSKILAICSVVDDEYDVYGTLDELQVFTDAICRLDVAAMENLPEYVKPLYEAIFFSLKEFEEELAREGNAYRVNYLREEVKNLCKSYLQETKWLHQRYIPTLEEYLLVSEISSTYTVIFNGCFVGCGEIATKEVFEWFQAFPKLLSDSARIGRIADDIMSCKFEQSRGHCPSAVECCMEEHQCTKEVALGNLDGVLGRAWKDMNKACMRPTPFPMEVLRPIVNLARMAEISYQYEDGYTFSGGKTKERISMLYKDPIPV.

Mg(2+)-binding residues include D315, D319, D459, and E467. A DDXXD motif motif is present at residues 315–319 (DDEYD).

Belongs to the terpene synthase family. Tpsa subfamily. The cofactor is Mg(2+). It depends on Mn(2+) as a cofactor. Expressed at low levels in stems, leaves, roots and fruits.

The catalysed reaction is (2E,6E)-farnesyl diphosphate = delta-cadinene + diphosphate. It catalyses the reaction (2E,6E)-farnesyl diphosphate = alpha-cadinene + diphosphate. It carries out the reaction (2E,6E)-farnesyl diphosphate + H2O = (-)-delta-cadinol + diphosphate. Its pathway is secondary metabolite biosynthesis; terpenoid biosynthesis. Functionally, sesquiterpene synthase involved in the biosynthesis of volatile compounds that contribute to the characteristic flavors of black pepper. Mediates the conversion of (2E,6E)-farnesyl diphosphate (FPP) into alpha-cadinene, delta-cadinene and delta-cadinol. This Piper nigrum (Black pepper) protein is Terpene synthase 2.